We begin with the raw amino-acid sequence, 349 residues long: N-acetyl-gamma-glutamyl-phosphate reductase (349 aa).

Cys-149 is a catalytic residue.

It belongs to the NAGSA dehydrogenase family. Type 1 subfamily.

Its subcellular location is the cytoplasm. The catalysed reaction is N-acetyl-L-glutamate 5-semialdehyde + phosphate + NADP(+) = N-acetyl-L-glutamyl 5-phosphate + NADPH + H(+). It functions in the pathway amino-acid biosynthesis; L-arginine biosynthesis; N(2)-acetyl-L-ornithine from L-glutamate: step 3/4. Functionally, catalyzes the NADPH-dependent reduction of N-acetyl-5-glutamyl phosphate to yield N-acetyl-L-glutamate 5-semialdehyde. The sequence is that of N-acetyl-gamma-glutamyl-phosphate reductase from Acinetobacter baumannii (strain SDF).